A 46-amino-acid polypeptide reads, in one-letter code: Light-harvesting protein B-800/850 beta 1 chain (46 aa).

At 2-19 (AERSLSGLTEEEAIAVHD) the chain is on the cytoplasmic side. 2 residues coordinate a bacteriochlorophyll: His18 and His36. A helical transmembrane segment spans residues 20–42 (QFKTTFSAFIILAAVAHVLVWVW). The Periplasmic portion of the chain corresponds to 43–46 (KPWF).

The protein belongs to the antenna complex beta subunit family. In terms of assembly, the core complex is formed by different alpha and beta chains, binding bacteriochlorophyll molecules, and arranged most probably in tetrameric structures disposed around the reaction center.

Its subcellular location is the cell inner membrane. Functionally, antenna complexes are light-harvesting systems, which transfer the excitation energy to the reaction centers. The protein is Light-harvesting protein B-800/850 beta 1 chain (B1) of Magnetospirillum molischianum (Rhodospirillum molischianum).